The following is a 499-amino-acid chain: AVGPVADNTITDAATSPDGFSRQAVVVNGVTPGPLVAGNIGDRFQLNVIDNLTNHTMLKTTSVHWHGFFQQGTNWADGPAFINQCPISPGHSFLYDFQVPNQAGTFWYHSHLSTQYCDGLRGPFVVYDPNDPHASRYDVDNDDTVITLADWYHTAAKLGPRFPAGADATLINGKGRAPSDTSAELSVIKVTKGKRYRFRLVSLSCDPNFTFSIDGHNLTIIEVDSSNSQPLSVDSIQIFAAQRYSFVLNANQAVDNYWIRANPNFGNVGFNGGINSAILRYDGAPAVEPTTNQTTSVKPLNEVNLHPLVSTPVPGSPSSGGVDKAINMAFNFNGSNFFINGASFVPPSVPVLLQILSGAQTAQDLLPSGSVYVLPSNASIEISFPATAAAPGAPHPFHLHGHTFAVVRSAGSTVYNYSNPIFRDVVSTGTPAAGDNVTIRFLTNNPGPWFLHCHIDFHLEGGFAVVQAEDVPDVKATNPVPQAWSDLCPTYDANAPSDQ.

Plastocyanin-like domains lie at 2–127 (VGPV…FVVY) and 139–281 (VDND…ILRY). Asn51 and Asn54 each carry an N-linked (GlcNAc...) asparagine glycan. Cu cation-binding residues include His64, His66, His109, and His111. Disulfide bonds link Cys85–Cys488 and Cys117–Cys205. Tyr196 is subject to 3'-nitrotyrosine. 4 N-linked (GlcNAc...) asparagine glycosylation sites follow: Asn208, Asn217, Asn292, and Asn333. The region spanning 348-470 (SVPVLLQILS…GGFAVVQAED (123 aa)) is the Plastocyanin-like 3 domain. Position 372 is a 3'-nitrotyrosine (Tyr372). Residue Asn377 is glycosylated (N-linked (GlcNAc...) asparagine). Cu cation contacts are provided by His395, His398, and His400. N-linked (GlcNAc...) asparagine glycosylation is found at Asn416 and Asn436. 4 residues coordinate Cu cation: His452, Cys453, His454, and His458.

It belongs to the multicopper oxidase family. Cu cation serves as cofactor.

The protein localises to the secreted. It carries out the reaction 4 hydroquinone + O2 = 4 benzosemiquinone + 2 H2O. Functionally, lignin degradation and detoxification of lignin-derived products. This is Laccase from Trametes maxima (White-rot fungus).